A 177-amino-acid polypeptide reads, in one-letter code: RNA polymerase sigma-E factor (177 aa).

Positions Asp34–Trp47 match the Polymerase core binding motif. The segment at residues Thr128 to His147 is a DNA-binding region (H-T-H motif).

The protein belongs to the sigma-70 factor family. ECF subfamily.

It localises to the cytoplasm. In terms of biological role, sigma factors are initiation factors that promote the attachment of RNA polymerase to specific initiation sites and are then released. This sigma factor is required for normal cell wall integrity; it is recruited by RNA polymerase to transcribe genes with cell wall-related functions. It is also involved in the transcription of the dagA gene coding for an extracellular agar-degrading enzyme. In Streptomyces coelicolor (strain ATCC BAA-471 / A3(2) / M145), this protein is RNA polymerase sigma-E factor (sigE).